Here is a 507-residue protein sequence, read N- to C-terminus: Pyruvate kinase (507 aa).

R50 serves as a coordination point for substrate. Residues N52, S54, D84, and T85 each contribute to the K(+) site. 52–55 (NFSH) provides a ligand contact to ATP. Residues R91 and K177 each coordinate ATP. Mg(2+) is bound at residue E242. Substrate is bound by residues G265, D266, and T298. D266 contacts Mg(2+).

It belongs to the pyruvate kinase family. Homotetramer. Mg(2+) serves as cofactor. K(+) is required as a cofactor.

The enzyme catalyses pyruvate + ATP = phosphoenolpyruvate + ADP + H(+). It participates in carbohydrate degradation; glycolysis; pyruvate from D-glyceraldehyde 3-phosphate: step 5/5. The sequence is that of Pyruvate kinase (pyk) from Dictyostelium discoideum (Social amoeba).